The following is an 874-amino-acid chain: Alanine--tRNA ligase (874 aa).

Positions 564, 568, 665, and 669 each coordinate Zn(2+).

The protein belongs to the class-II aminoacyl-tRNA synthetase family. Zn(2+) is required as a cofactor.

It is found in the cytoplasm. It catalyses the reaction tRNA(Ala) + L-alanine + ATP = L-alanyl-tRNA(Ala) + AMP + diphosphate. In terms of biological role, catalyzes the attachment of alanine to tRNA(Ala) in a two-step reaction: alanine is first activated by ATP to form Ala-AMP and then transferred to the acceptor end of tRNA(Ala). Also edits incorrectly charged Ser-tRNA(Ala) and Gly-tRNA(Ala) via its editing domain. The polypeptide is Alanine--tRNA ligase (Burkholderia mallei (strain ATCC 23344)).